Here is a 259-residue protein sequence, read N- to C-terminus: Cytosolic Fe-S cluster assembly factor Nubp2 homolog (259 aa).

14–21 (GKGGVGKS) contacts ATP. Cys188 and Cys191 together coordinate [4Fe-4S] cluster.

Belongs to the Mrp/NBP35 ATP-binding proteins family. NUBP2/CFD1 subfamily. Heterotetramer of 2 Nubp1 and 2 Nubp2 chains. [4Fe-4S] cluster is required as a cofactor.

Its subcellular location is the cytoplasm. Functionally, component of the cytosolic iron-sulfur (Fe/S) protein assembly (CIA) machinery. Required for maturation of extramitochondrial Fe-S proteins. The Nubp1-Nubp2 heterotetramer forms a Fe-S scaffold complex, mediating the de novo assembly of an Fe-S cluster and its transfer to target apoproteins. This is Cytosolic Fe-S cluster assembly factor Nubp2 homolog from Anopheles gambiae (African malaria mosquito).